The chain runs to 249 residues: Enolase-phosphatase E1 (249 aa).

It belongs to the HAD-like hydrolase superfamily. MasA/MtnC family. Monomer. Mg(2+) is required as a cofactor.

It catalyses the reaction 5-methylsulfanyl-2,3-dioxopentyl phosphate + H2O = 1,2-dihydroxy-5-(methylsulfanyl)pent-1-en-3-one + phosphate. It functions in the pathway amino-acid biosynthesis; L-methionine biosynthesis via salvage pathway; L-methionine from S-methyl-5-thio-alpha-D-ribose 1-phosphate: step 3/6. Its pathway is amino-acid biosynthesis; L-methionine biosynthesis via salvage pathway; L-methionine from S-methyl-5-thio-alpha-D-ribose 1-phosphate: step 4/6. Bifunctional enzyme that catalyzes the enolization of 2,3-diketo-5-methylthiopentyl-1-phosphate (DK-MTP-1-P) into the intermediate 2-hydroxy-3-keto-5-methylthiopentenyl-1-phosphate (HK-MTPenyl-1-P), which is then dephosphorylated to form the acireductone 1,2-dihydroxy-3-keto-5-methylthiopentene (DHK-MTPene). In Pseudomonas aeruginosa (strain ATCC 15692 / DSM 22644 / CIP 104116 / JCM 14847 / LMG 12228 / 1C / PRS 101 / PAO1), this protein is Enolase-phosphatase E1.